Reading from the N-terminus, the 498-residue chain is Cytochrome P450 monooxygenase astB (498 aa).

The chain crosses the membrane as a helical span at residues 7–27 (FTTMPVVLLVGLVLYQLLAFT). N-linked (GlcNAc...) asparagine glycans are attached at residues asparagine 237, asparagine 248, and asparagine 346. Heme is bound at residue cysteine 425.

This sequence belongs to the cytochrome P450 family. Heme is required as a cofactor.

Its subcellular location is the membrane. It carries out the reaction preasperterpenoid A + 4 reduced [NADPH--hemoprotein reductase] + 4 O2 = asperterpenoid A + 4 oxidized [NADPH--hemoprotein reductase] + 5 H2O + 5 H(+). The enzyme catalyses asperterpenoid A + 2 reduced [NADPH--hemoprotein reductase] + 2 O2 = asperterpenoid B + 2 oxidized [NADPH--hemoprotein reductase] + 3 H2O + 3 H(+). It participates in secondary metabolite biosynthesis; terpenoid biosynthesis. Cytochrome P450 monooxygenase; part of the gene cluster that mediates the biosynthesis of the asperterpenoids, sesterterpenes that exhibit anti-tuberculosis activity. The first step of the pathway is performed by the sesterterpene synthase astC that possesses both prenyl transferase and terpene cyclase activity, converting isopentenyl diphosphate and dimethylallyl diphosphate into geranylfarnesyl diphosphate (GFPP) and further converting GFPP into preasperterpenoid A, respectively. The cytochrome P450 monooxygenase astB then dually oxidizes preasperterpenoid A to produce asperterpenoid A along with a minor product, asperterpenoid B. Finally, the cytochrome P450 monooxygenase astA converts asperterpenoid A into asperterpenoid C. This Talaromyces wortmannii (Penicillium wortmannii) protein is Cytochrome P450 monooxygenase astB.